The primary structure comprises 234 residues: Enterobactin synthase component D (234 aa).

Mg(2+) contacts are provided by aspartate 107, glutamate 109, and glutamate 152.

The protein belongs to the P-Pant transferase superfamily. EntD family. In terms of assembly, entB, EntD, EntE, and EntF form a multienzyme complex called enterobactin synthase. The cofactor is Mg(2+).

The protein resides in the membrane. The catalysed reaction is apo-[aryl-carrier protein] + CoA = holo-[aryl-carrier protein] + adenosine 3',5'-bisphosphate + H(+). It catalyses the reaction apo-[peptidyl-carrier protein] + CoA = holo-[peptidyl-carrier protein] + adenosine 3',5'-bisphosphate + H(+). It participates in siderophore biosynthesis; enterobactin biosynthesis. Functionally, involved in the biosynthesis of the siderophore enterobactin (enterochelin), which is a macrocyclic trimeric lactone of N-(2,3-dihydroxybenzoyl)-serine. The serine trilactone serves as a scaffolding for the three catechol functionalities that provide hexadentate coordination for the tightly ligated iron(2+) atoms. Plays an essential role in the assembly of the enterobactin by catalyzing the transfer of the 4'-phosphopantetheine (Ppant) moiety from coenzyme A to the apo-domains of both EntB (ArCP domain) and EntF (PCP domain) to yield their holo-forms which make them competent for the activation of 2,3-dihydroxybenzoate (DHB) and L-serine, respectively. This Salmonella typhimurium (strain LT2 / SGSC1412 / ATCC 700720) protein is Enterobactin synthase component D.